We begin with the raw amino-acid sequence, 96 residues long: uncharacterized protein (96 aa).

Residues 1-21 (MSDFEIIVGISSLLQVIILNI) traverse the membrane as a helical segment.

It is found in the membrane. This is an uncharacterized protein from Saccharomyces cerevisiae (strain ATCC 204508 / S288c) (Baker's yeast).